The following is a 175-amino-acid chain: QLTLALIKPDAVAHPLILEAVHQQILSNKFLIVRMRELLWKPEDCRRFYREHEGRFFYQRLVEFMTSGPIRAYILAHKDAIQLWRTLMGPTRVFRARHIAPDSIRGSLGLTDTRNTTHGSDSVVSASREIAAFFPDFSEQRWYEEEEPQLRCGPVHYSPEEGIHCAAETGGPKPA.

ATP contacts are provided by Lys8, Phe57, Arg85, Thr91, Arg105, and Asn115. The active-site Pros-phosphohistidine intermediate is His118.

The protein belongs to the NDK family. Requires Mg(2+) as cofactor.

It carries out the reaction a 2'-deoxyribonucleoside 5'-diphosphate + ATP = a 2'-deoxyribonucleoside 5'-triphosphate + ADP. It catalyses the reaction a ribonucleoside 5'-diphosphate + ATP = a ribonucleoside 5'-triphosphate + ADP. In terms of biological role, major role in the synthesis of nucleoside triphosphates other than ATP. The ATP gamma phosphate is transferred to the NDP beta phosphate via a ping-pong mechanism, using a phosphorylated active-site intermediate. This Rattus norvegicus (Rat) protein is Nucleoside diphosphate kinase 6 (Nme6).